Here is a 22-residue protein sequence, read N- to C-terminus: Pectinesterase (22 aa).

Aspartate 6 acts as the Proton donor in catalysis. Positions 19 and 21 each coordinate substrate.

This sequence belongs to the pectinesterase family.

Its subcellular location is the secreted. It is found in the cell wall. The enzyme catalyses [(1-&gt;4)-alpha-D-galacturonosyl methyl ester](n) + n H2O = [(1-&gt;4)-alpha-D-galacturonosyl](n) + n methanol + n H(+). It functions in the pathway glycan metabolism; pectin degradation; 2-dehydro-3-deoxy-D-gluconate from pectin: step 1/5. This is Pectinesterase from Capsicum chinense (Scotch bonnet).